We begin with the raw amino-acid sequence, 309 residues long: Putative HTH-type transcriptional regulatory protein AF_1787 (309 aa).

Residues 131 to 185 (IREARERLGLSVGDMAKMLGVSRRTVKKYEEGTDTTLSTAAKIEEIIGTFAIKEI) form the HTH cro/C1-type domain. A DNA-binding region (H-T-H motif) is located at residues 142-161 (VGDMAKMLGVSRRTVKKYEE).

The sequence is that of Putative HTH-type transcriptional regulatory protein AF_1787 from Archaeoglobus fulgidus (strain ATCC 49558 / DSM 4304 / JCM 9628 / NBRC 100126 / VC-16).